Consider the following 229-residue polypeptide: UPF0173 metal-dependent hydrolase SAOUHSC_01815 (229 aa).

It belongs to the UPF0173 family.

This Staphylococcus aureus (strain NCTC 8325 / PS 47) protein is UPF0173 metal-dependent hydrolase SAOUHSC_01815.